Reading from the N-terminus, the 473-residue chain is Knob-associated histidine-rich protein (473 aa).

An N-terminal signal peptide occupies residues 1–34 (MKSFKNKNTLRRKKAFPVFTKILLVSFLVWVLKC). The N-linked (GlcNAc...) asparagine glycan is linked to N42. The span at 57 to 87 (AQKQHEHHHHHHHQHQHQHQAPHQAHHHHHH) shows a compositional bias: basic residues. 2 disordered regions span residues 57–143 (AQKQ…QVFR) and 347–473 (SSVN…DGSK). Residues 95–104 (PQVHQQVHGQ) are compositionally biased toward low complexity. Residues 108–117 (HHHHHHHHHQ) are compositionally biased toward basic residues. 2 stretches are compositionally biased toward basic and acidic residues: residues 354-375 (KHGDEKHHSSKKHEGNDGEGEK) and 396-405 (KDNEDAESVK). Basic residues predominate over residues 406–422 (SKKHKSHDCEKKKSKKH). 2 stretches are compositionally biased toward basic and acidic residues: residues 423–444 (KDNEDAESVKSKKSVKEKGEKH) and 453–473 (KTNEENKNKEKTNNLKSDGSK).

The protein localises to the secreted. Its function is as follows. KAHRP might mimick human histidine-rich glycoproteins to anchor host thrombospondin or a parasite analog in a binding complex with the endothelial cell receptor. The chain is Knob-associated histidine-rich protein from Plasmodium falciparum.